Here is a 140-residue protein sequence, read N- to C-terminus: MASAAAGASICIKSASFSPLAPGRISSLRSVSLPVSRKSFPSLKSSKSSFALRVSCQAKPETVAKVCGIVKKQLALPDDSEVNGLSKFSALGADSLDTVEIVMGLEEEFGISVEEESAQSIQTVQDAADLIEKLMEKKGH.

A chloroplast-targeting transit peptide spans 1–56; sequence MASAAAGASICIKSASFSPLAPGRISSLRSVSLPVSRKSFPSLKSSKSSFALRVSC. The Carrier domain occupies 60–135; that stretch reads PETVAKVCGI…DAADLIEKLM (76 aa). Position 95 is an O-(pantetheine 4'-phosphoryl)serine (Ser95).

The protein belongs to the acyl carrier protein (ACP) family. In terms of processing, 4'-phosphopantetheine is transferred from CoA to a specific serine of apo-ACP by acpS. This modification is essential for activity because fatty acids are bound in thioester linkage to the sulfhydryl of the prosthetic group.

The protein resides in the plastid. The protein localises to the chloroplast. Its pathway is lipid metabolism; fatty acid biosynthesis. Carrier of the growing fatty acid chain in fatty acid biosynthesis. The protein is Acyl carrier protein 1, chloroplastic (ACL1.1) of Cuphea lanceolata (Cigar flower).